We begin with the raw amino-acid sequence, 149 residues long: Transcriptional repressor NrdR (149 aa).

Residues C3–C34 fold into a zinc finger. In terms of domain architecture, ATP-cone spans P49–E139.

This sequence belongs to the NrdR family. The cofactor is Zn(2+).

In terms of biological role, negatively regulates transcription of bacterial ribonucleotide reductase nrd genes and operons by binding to NrdR-boxes. The polypeptide is Transcriptional repressor NrdR (Ralstonia nicotianae (strain ATCC BAA-1114 / GMI1000) (Ralstonia solanacearum)).